A 104-amino-acid chain; its full sequence is Antitoxin HigA-2 (104 aa).

An HTH cro/C1-type domain is found at 45–98 (IVSIREQFNMSRGVFARLLHTSSRTLENWEQGRSVPNGQAVTLLKLVQRHPETL). The segment at residues 56 to 75 (RGVFARLLHTSSRTLENWEQ) is a DNA-binding region (H-T-H motif).

Its function is as follows. Antitoxin component of a type II toxin-antitoxin (TA) system that counteracts the effect of the HigB-2 toxin. Binds to its own promoter and regulates transcription of the higB-2/higA-2 operon. This is Antitoxin HigA-2 (higA-2) from Vibrio cholerae serotype O1 (strain ATCC 39315 / El Tor Inaba N16961).